The following is a 418-amino-acid chain: Maltoporin (418 aa).

Residues 1–26 form the signal peptide; the sequence is MLPMNRNTLGLAVTIATVFVSSTVTA.

This sequence belongs to the porin LamB (TC 1.B.3) family. In terms of assembly, homotrimer formed of three 18-stranded antiparallel beta-barrels, containing three independent channels.

The protein localises to the cell outer membrane. The catalysed reaction is beta-maltose(in) = beta-maltose(out). Involved in the transport of maltose and maltodextrins. This chain is Maltoporin, found in Photobacterium profundum (strain SS9).